The chain runs to 469 residues: MLSENEIKILEYLSKKREASAEDISKQLNIPIESVFSISQLLKEKGYIEVEEKKVIKYELTDEGKRRLKEGFPEEKLVKLLDGKEKKIHELKDKLGRDFEISIGWAKRKGLVKIDGDTVIPLVKDYEAKEEKEALINPEKANKDILQQLLNRKLLIKKEEKILNIRLIREPLEIKPALIFLTPELLASGEWKKYALREYNVEAYPPFYPIGKKHFFKEFLERLRDLMRDLGFKEVYSDYVEIEFYNFDLLFQAQDHPAREIHDSFAISGKGKLTDEKLIQRVKQIHERGWKYNWDVNISMRLMLRSQTTATTARVLASRPKPPIRVFTIGKVFRPDSIDATHLIEFHQLDGLVIEDNFTFRDLLGTLKEIFNGIGIKEIRFKPAYFPFTEPSVEVYGKIEGLGWVEMAGAGLLRPEILEAVEISSSAGAWGLGIDRLAMLLLGLKDIRLLYATDIEYLRNRKVEINADN.

Residues T309, 348 to 350 (QLD), and F388 contribute to the L-phenylalanine site. E390 is a binding site for Mg(2+).

This sequence belongs to the class-II aminoacyl-tRNA synthetase family. Phe-tRNA synthetase alpha subunit type 2 subfamily. As to quaternary structure, tetramer of two alpha and two beta subunits. The cofactor is Mg(2+).

The protein localises to the cytoplasm. The enzyme catalyses tRNA(Phe) + L-phenylalanine + ATP = L-phenylalanyl-tRNA(Phe) + AMP + diphosphate + H(+). This chain is Phenylalanine--tRNA ligase alpha subunit, found in Sulfurisphaera tokodaii (strain DSM 16993 / JCM 10545 / NBRC 100140 / 7) (Sulfolobus tokodaii).